The primary structure comprises 364 residues: Oxidized polyvinyl alcohol hydrolase (364 aa).

A signal peptide spans 1 to 34; that stretch reads MFKPVVKSRSSRSFCYLAGCLAMVAATLSSTAQA. Catalysis depends on charge relay system residues Ser190 and Ser293.

The protein belongs to the peptidase S9A family. As to quaternary structure, monomer.

Its subcellular location is the periplasm. The catalysed reaction is nonane-4,6-dione + H2O = pentan-2-one + butanoate + H(+). Catalyzes the hydrolysis of 4,6-nonanedione, a beta-diketone compound. Also mediates hydrolysis of oxidized polyvinyl alcohol (PVA) in the second step in the degradation of polyvinyl alcohol. Not active toward the monoketone structure. The sequence is that of Oxidized polyvinyl alcohol hydrolase (oph) from Sphingopyxis sp. (strain 113P3).